We begin with the raw amino-acid sequence, 61 residues long: MAKSKNHTNHNQNKKAHRNGIKRPQKHRYDSLKYRDAKFRRNQKFANRGTVEAIRQAKASA.

The span at 1-26 (MAKSKNHTNHNQNKKAHRNGIKRPQK) shows a compositional bias: basic residues. The interval 1-32 (MAKSKNHTNHNQNKKAHRNGIKRPQKHRYDSL) is disordered.

The protein belongs to the eukaryotic ribosomal protein eL29 family. Component of the large ribosomal subunit (LSU). Mature yeast ribosomes consist of a small (40S) and a large (60S) subunit. The 40S small subunit contains 1 molecule of ribosomal RNA (18S rRNA) and at least 33 different proteins. The large 60S subunit contains 3 rRNA molecules (25S, 5.8S and 5S rRNA) and at least 46 different proteins.

It localises to the cytoplasm. Its subcellular location is the nucleus. The protein resides in the nucleolus. Functionally, component of the ribosome, a large ribonucleoprotein complex responsible for the synthesis of proteins in the cell. The small ribosomal subunit (SSU) binds messenger RNAs (mRNAs) and translates the encoded message by selecting cognate aminoacyl-transfer RNA (tRNA) molecules. The large subunit (LSU) contains the ribosomal catalytic site termed the peptidyl transferase center (PTC), which catalyzes the formation of peptide bonds, thereby polymerizing the amino acids delivered by tRNAs into a polypeptide chain. The nascent polypeptides leave the ribosome through a tunnel in the LSU and interact with protein factors that function in enzymatic processing, targeting, and the membrane insertion of nascent chains at the exit of the ribosomal tunnel. This is Large ribosomal subunit protein eL29 (rpl29) from Schizosaccharomyces pombe (strain 972 / ATCC 24843) (Fission yeast).